We begin with the raw amino-acid sequence, 206 residues long: Ribosomal RNA large subunit methyltransferase E (206 aa).

S-adenosyl-L-methionine contacts are provided by Gly60, Trp62, Asp80, Asp96, and Asp121. Lys161 serves as the catalytic Proton acceptor.

Belongs to the class I-like SAM-binding methyltransferase superfamily. RNA methyltransferase RlmE family.

It is found in the cytoplasm. It carries out the reaction uridine(2552) in 23S rRNA + S-adenosyl-L-methionine = 2'-O-methyluridine(2552) in 23S rRNA + S-adenosyl-L-homocysteine + H(+). Specifically methylates the uridine in position 2552 of 23S rRNA at the 2'-O position of the ribose in the fully assembled 50S ribosomal subunit. This is Ribosomal RNA large subunit methyltransferase E from Saccharophagus degradans (strain 2-40 / ATCC 43961 / DSM 17024).